A 366-amino-acid polypeptide reads, in one-letter code: G-protein coupled receptor 183-B (366 aa).

Topologically, residues 1–24 (MMSPDLDLNFSSNCNLYDHRPVAR) are extracellular. Asn9 carries N-linked (GlcNAc...) asparagine glycosylation. Residues 25–50 (VLIPLVYSIICPVGLLGNALALHVVI) form a helical membrane-spanning segment. Over 51-70 (SSTTKINSITLYSANLAVSD) the chain is Cytoplasmic. A helical transmembrane segment spans residues 71 to 88 (ILFCLSLPLRAVYYGLGF). Topologically, residues 89 to 98 (HWPMGEVLCK) are extracellular. Cysteines 97 and 175 form a disulfide. Residues 99–120 (AIALLFYLNCYAGVNFMTCLAV) traverse the membrane as a helical segment. Residues 121-142 (DRFVALVFPARLAKLRKAKNVR) lie on the Cytoplasmic side of the membrane. Residues 143-161 (FVCLAIWLLVLAQTLPLLT) form a helical membrane-spanning segment. At 162-187 (IGLTKTEPDSSITCMEYPNFEGVFKG) the chain is on the extracellular side. The helical transmembrane segment at 188 to 210 (LPYMLIVAVVLGFGIPVMTIIAC) threads the bilayer. Residues 211 to 236 (YSILTHKLHQAAKSNQLTERSGKTKK) lie on the Cytoplasmic side of the membrane. Residues 237–260 (ARGVIAGVVFVFVVCFSPYHIDIL) traverse the membrane as a helical segment. The Extracellular segment spans residues 261–280 (QYMIRKLLYETDCKELQSFQ). A helical transmembrane segment spans residues 281 to 305 (ISLHITVCLMNLNSCLDPFVYFFAC). Residues 306-366 (KGYKQKVMRM…QQICYQPSAT (61 aa)) lie on the Cytoplasmic side of the membrane.

It belongs to the G-protein coupled receptor 1 family.

The protein localises to the cell membrane. Probable receptor for oxysterols that plays a central role during humoral immunity. Promotes activated B-cell localization in the outer follicle and interfollicular regions. The chain is G-protein coupled receptor 183-B (gpr183b) from Danio rerio (Zebrafish).